A 61-amino-acid chain; its full sequence is Protein translocase subunit SecE (61 aa).

Residues 39 to 59 (VGIIIIGLIGFILSIVSQVLF) form a helical membrane-spanning segment.

Belongs to the SecE/SEC61-gamma family. As to quaternary structure, component of the Sec protein translocase complex. Heterotrimer consisting of SecY (alpha), SecG (beta) and SecE (gamma) subunits. The heterotrimers can form oligomers, although 1 heterotrimer is thought to be able to translocate proteins. Interacts with the ribosome. May interact with SecDF, and other proteins may be involved.

It is found in the cell membrane. Functionally, essential subunit of the Sec protein translocation channel SecYEG. Clamps together the 2 halves of SecY. May contact the channel plug during translocation. This Methanosphaera stadtmanae (strain ATCC 43021 / DSM 3091 / JCM 11832 / MCB-3) protein is Protein translocase subunit SecE.